Consider the following 346-residue polypeptide: Hydroxyproline O-galactosyltransferase HPGT3 (346 aa).

Over residues M1–S10 the composition is skewed to polar residues. A disordered region spans residues M1 to F21. Residues M1–P28 lie on the Cytoplasmic side of the membrane. The chain crosses the membrane as a helical; Signal-anchor for type II membrane protein span at residues S29–G45. Topologically, residues R46 to A346 are lumenal.

The protein belongs to the glycosyltransferase 31 family. The cofactor is Mn(2+). Expressed in roots, rosette leaves, cauline leaves, stems, flowers and siliques.

Its subcellular location is the golgi apparatus membrane. Its pathway is protein modification; protein glycosylation. Functionally, possesses hydroxyproline O-galactosyltransferase activity. Transfers galactose from UDP-galactose to hydroxyproline residues in the arabinogalactan proteins (AGPs). Is specific for AGPs containing non-contiguous peptidyl hydroxyproline residues. The addition of galactose onto the peptidyl hydroxyproline residues in AGP core proteins represents the first committed step in arabinogalactan polysaccharide addition. AGP glycans play essential roles in both vegetative and reproductive plant growth. This chain is Hydroxyproline O-galactosyltransferase HPGT3, found in Arabidopsis thaliana (Mouse-ear cress).